A 488-amino-acid polypeptide reads, in one-letter code: Malonate-semialdehyde dehydrogenase (488 aa).

Ala150, Phe152, Lys176, Glu179, Arg180, Ser229, and Thr251 together coordinate NAD(+). Cys284 serves as the catalytic Nucleophile. An NAD(+)-binding site is contributed by Glu382.

It belongs to the aldehyde dehydrogenase family. IolA subfamily. In terms of assembly, homotetramer.

The catalysed reaction is 3-oxopropanoate + NAD(+) + CoA + H2O = hydrogencarbonate + acetyl-CoA + NADH + H(+). It catalyses the reaction 2-methyl-3-oxopropanoate + NAD(+) + CoA + H2O = propanoyl-CoA + hydrogencarbonate + NADH + H(+). Its pathway is polyol metabolism; myo-inositol degradation into acetyl-CoA; acetyl-CoA from myo-inositol: step 7/7. Catalyzes the oxidation of malonate semialdehyde (MSA) and methylmalonate semialdehyde (MMSA) into acetyl-CoA and propanoyl-CoA, respectively. Is involved in a myo-inositol catabolic pathway. Bicarbonate, and not CO2, is the end-product of the enzymatic reaction. This is Malonate-semialdehyde dehydrogenase from Listeria monocytogenes serovar 1/2a (strain ATCC BAA-679 / EGD-e).